The following is a 117-amino-acid chain: Ribosome-binding factor A (117 aa).

It belongs to the RbfA family. As to quaternary structure, monomer. Binds 30S ribosomal subunits, but not 50S ribosomal subunits or 70S ribosomes.

The protein localises to the cytoplasm. Functionally, one of several proteins that assist in the late maturation steps of the functional core of the 30S ribosomal subunit. Associates with free 30S ribosomal subunits (but not with 30S subunits that are part of 70S ribosomes or polysomes). Required for efficient processing of 16S rRNA. May interact with the 5'-terminal helix region of 16S rRNA. The protein is Ribosome-binding factor A of Anaplasma marginale (strain St. Maries).